Consider the following 184-residue polypeptide: NADH-quinone oxidoreductase subunit B (184 aa).

[4Fe-4S] cluster-binding residues include Cys-37, Cys-38, Cys-103, and Cys-132. A disordered region spans residues 164–184; sequence HEREEAAKHALPTHSMKGLLR.

It belongs to the complex I 20 kDa subunit family. NDH-1 is composed of 14 different subunits. Subunits NuoB, C, D, E, F, and G constitute the peripheral sector of the complex. The cofactor is [4Fe-4S] cluster.

It localises to the cell membrane. The catalysed reaction is a quinone + NADH + 5 H(+)(in) = a quinol + NAD(+) + 4 H(+)(out). In terms of biological role, NDH-1 shuttles electrons from NADH, via FMN and iron-sulfur (Fe-S) centers, to quinones in the respiratory chain. The immediate electron acceptor for the enzyme in this species is believed to be a menaquinone. Couples the redox reaction to proton translocation (for every two electrons transferred, four hydrogen ions are translocated across the cytoplasmic membrane), and thus conserves the redox energy in a proton gradient. This chain is NADH-quinone oxidoreductase subunit B, found in Acidothermus cellulolyticus (strain ATCC 43068 / DSM 8971 / 11B).